We begin with the raw amino-acid sequence, 378 residues long: Protein RecA (378 aa).

Residue 79–86 (GPESSGKT) coordinates ATP.

Belongs to the RecA family.

Its subcellular location is the cytoplasm. Its function is as follows. Can catalyze the hydrolysis of ATP in the presence of single-stranded DNA, the ATP-dependent uptake of single-stranded DNA by duplex DNA, and the ATP-dependent hybridization of homologous single-stranded DNAs. It interacts with LexA causing its activation and leading to its autocatalytic cleavage. The protein is Protein RecA of Streptococcus pyogenes serotype M1.